The following is a 503-amino-acid chain: Intracellular exo-alpha-(1-&gt;5)-L-arabinofuranosidase (503 aa).

Alpha-L-arabinofuranose-binding residues include Glu27, Asn72, and Asn172. Residue Glu173 is the Proton donor/acceptor of the active site. Alpha-L-arabinofuranose contacts are provided by Tyr244, Glu292, and Gln352. The active-site Nucleophile is the Glu292.

This sequence belongs to the glycosyl hydrolase 51 family. Homohexamer; trimer of dimers.

It localises to the cytoplasm. The enzyme catalyses Hydrolysis of terminal non-reducing alpha-L-arabinofuranoside residues in alpha-L-arabinosides.. It functions in the pathway glycan metabolism; L-arabinan degradation. Its function is as follows. Involved in the degradation of arabinan and is a key enzyme in the complete degradation of the plant cell wall. Catalyzes the cleavage of terminal alpha-(1-&gt;5)-arabinofuranosyl bonds in small oligosaccharides as alpha-(1-&gt;5)-linked arabinobiose/arabinotriose, but does not display significant activity against linear non-substituted arabinan. It is also highly efficient in the cleavage of alpha-(1-&gt;3)-linked arabinoside of xylobiose and of the alpha-(1-&gt;3)-linked arabinoside decorations of polymeric wheat arabinoxylan. It exhibits very low activity against sugar beet arabinan. The chain is Intracellular exo-alpha-(1-&gt;5)-L-arabinofuranosidase from Acetivibrio thermocellus (strain ATCC 27405 / DSM 1237 / JCM 9322 / NBRC 103400 / NCIMB 10682 / NRRL B-4536 / VPI 7372) (Clostridium thermocellum).